We begin with the raw amino-acid sequence, 66 residues long: Phylloseptin-H5 (66 aa).

The first 22 residues, 1–22 (MAFLKKSLFLVLFLGLVSLSIC), serve as a signal peptide directing secretion. Positions 23-44 (EEEKRETEEEENEQEDDDKSEE) are excised as a propeptide. The disordered stretch occupies residues 24–44 (EEKRETEEEENEQEDDDKSEE). Positions 30 to 41 (EEEENEQEDDDK) are enriched in acidic residues. The residue at position 65 (phenylalanine 65) is a Phenylalanine amide.

As to expression, expressed by the skin glands.

It localises to the secreted. Has antibacterial activity against the Gram-negative bacteria E.coli and P.aeruginosa, and the Gram-positive bacterium S.aureus. No hemolytic activity. This chain is Phylloseptin-H5 (psn7), found in Pithecopus hypochondrialis (Orange-legged leaf frog).